The primary structure comprises 600 residues: MDKSKIRNFSIIAHIDHGKSTLADRILELTNTVEKREMQDQLLDSMDIERERGITIKLNSVQLKYHSKDNQDYIFNLIDTPGHVDFTYEVSRSLAACEGAILVVDASQGVEAQTLANVYLAIDSNLEIIPVINKIDLPSADVDKVKHEIEEIIGLDCSKSPLISAKTGLNVEDVLQAIVEKIPSPSDAIDNAPLKALIFDSYYDKYLGVVMSIRLKQGMLKVGDKIKLMSTNAEYEVTSLGIKTPKIVKKDFLEAGEVGWVAASIKTIKDVNVGDTITSVLNPADEPLDGYKKLKPMVYCGIYPIDTNKYQDFKEALEKIELSDSSLVYEPETSQALGFGFRCGFLGLLHMEVIQERLEREYNLELIATAPSVVYKVHLTNKQVIELDNPALLPEAQKISKIEEPFVEIKIATPSEYIGDLMNLCQNKLGIYKNMEVIDNNRRILIYQMPLAEIIFDFFNKLKSISKGYASFEYELIGYKESKLVRMDIKLNGEMVDAFSMIVNQKFAYQRGSALTLKLKELIPRQNFEVPVQATIGNKVISRETIKAYRKDVTWKLHAADKSRRKKLLEKQKEGKIKMKEIGTVEVPQEAFVAILKIDD.

The region spanning 4-186 (SKIRNFSIIA…AIVEKIPSPS (183 aa)) is the tr-type G domain. GTP is bound by residues 16–21 (DHGKST) and 133–136 (NKID).

The protein belongs to the TRAFAC class translation factor GTPase superfamily. Classic translation factor GTPase family. LepA subfamily.

Its subcellular location is the cell membrane. It carries out the reaction GTP + H2O = GDP + phosphate + H(+). Required for accurate and efficient protein synthesis under certain stress conditions. May act as a fidelity factor of the translation reaction, by catalyzing a one-codon backward translocation of tRNAs on improperly translocated ribosomes. Back-translocation proceeds from a post-translocation (POST) complex to a pre-translocation (PRE) complex, thus giving elongation factor G a second chance to translocate the tRNAs correctly. Binds to ribosomes in a GTP-dependent manner. This is Elongation factor 4 from Mycoplasma mycoides subsp. mycoides SC (strain CCUG 32753 / NCTC 10114 / PG1).